The sequence spans 212 residues: Protein-L-isoaspartate O-methyltransferase (212 aa).

Residue Ser60 is part of the active site.

Belongs to the methyltransferase superfamily. L-isoaspartyl/D-aspartyl protein methyltransferase family.

Its subcellular location is the cytoplasm. It carries out the reaction [protein]-L-isoaspartate + S-adenosyl-L-methionine = [protein]-L-isoaspartate alpha-methyl ester + S-adenosyl-L-homocysteine. In terms of biological role, catalyzes the methyl esterification of L-isoaspartyl residues in peptides and proteins that result from spontaneous decomposition of normal L-aspartyl and L-asparaginyl residues. It plays a role in the repair and/or degradation of damaged proteins. In Methanococcus maripaludis (strain C6 / ATCC BAA-1332), this protein is Protein-L-isoaspartate O-methyltransferase.